The following is a 332-amino-acid chain: MIVVTGAAGFIGSNLVRGLNRRGIYDIIAIDDLTEGDKFRNLVDCRIADYMHHEDARALLKAGQFPRVRAVLHQGACSDTTERNGQYMMDNNYRVTLEWFEYCQANRVPLIYASSAAVYGASTVYVEDPANEGPLNVYGYSKLLFDQVLRTRMDKLTAQVVGLRYFNVYGPHEQHKGRMASVAFHNMNQFLAEGHVRLFSGWDGYADGGQSRDFISVEDVVDVNLHFLDHPGTSGIFNCGTGRAQPFNDVAAAVVNTLRAEQGEAPLSLDELVSQGLIRYIPFPDDLKGRYQSFTQANVDALRAAGYTAVMRDVQTGVSEYVRYWRSRKSLA.

Residues 10–11 (FI), 31–32 (DD), Lys-38, 74–78 (QGACS), and Asn-91 each bind NADP(+). Tyr-138 functions as the Proton acceptor in the catalytic mechanism. NADP(+) is bound at residue Lys-142. Residue Asn-167 participates in substrate binding. Residues Val-168 and Lys-176 each coordinate NADP(+). Residue Lys-176 is the Proton acceptor of the active site. Residues Arg-178, His-185, 199–202 (FSGW), Arg-212, and Tyr-291 contribute to the substrate site.

It belongs to the NAD(P)-dependent epimerase/dehydratase family. HldD subfamily. In terms of assembly, homopentamer. The cofactor is NADP(+).

The enzyme catalyses ADP-D-glycero-beta-D-manno-heptose = ADP-L-glycero-beta-D-manno-heptose. The protein operates within nucleotide-sugar biosynthesis; ADP-L-glycero-beta-D-manno-heptose biosynthesis; ADP-L-glycero-beta-D-manno-heptose from D-glycero-beta-D-manno-heptose 7-phosphate: step 4/4. In terms of biological role, catalyzes the interconversion between ADP-D-glycero-beta-D-manno-heptose and ADP-L-glycero-beta-D-manno-heptose via an epimerization at carbon 6 of the heptose. The sequence is that of ADP-L-glycero-D-manno-heptose-6-epimerase from Bordetella avium (strain 197N).